The following is a 242-amino-acid chain: C-reactive protein 1.4 (242 aa).

An N-terminal signal peptide occupies residues 1–24 (MKTFHGPTFGTAVFLYLLLFLTSA). The Pentraxin (PTX) domain occupies 30-241 (ITSKVKFPPS…GVVLSPNEIC (212 aa)). T60 and Y63 together coordinate phosphocholine. Intrachain disulfides connect C62–C125 and C112–C144. Ca(2+)-binding residues include D85 and N86. N147 carries N-linked (GlcNAc...) asparagine glycosylation. Residues E168, Q169, D170, and Q180 each coordinate Ca(2+). A disulfide bond links C207 and C241.

It belongs to the pentraxin family. In terms of assembly, homopentamer. Pentraxin (or pentaxin) have a discoid arrangement of 5 non-covalently bound subunits. The cofactor is Ca(2+).

The protein localises to the secreted. Functionally, might serve the role of immunoglobulins. The sequence is that of C-reactive protein 1.4 from Limulus polyphemus (Atlantic horseshoe crab).